The following is a 742-amino-acid chain: MEEGFRDRAAFIRGAKDIAKEVKKHAAKKVVKGLDRVQDEYSRRSYSRFEEEDDDDDFPAPSDGYYRGEGTQDEEEGGASSDATEGHDEDDEIYEGEYQGIPGAESGGKGERMADGAPLAGVRGGLSDGEGPPGGRGEAQRRKEREELAQQYEAILRECSHGRFQWTLYFVLGLALMADGVEVFVVGFVLPSAEKDMCLSDSNKGMLGLIVYLGMMVGAFLWGGLADRLGRRQCLLISLSVNSVFAFFSSFVQGYGTFLFCRLLSGVGIGGSIPIVFSYFSEFLAQEKRGEHLSWLCMFWMIGGVYAAAMAWAIIPHYGWSFQMGSAYQFHSWRVFVLVCAFPSVFAIGALTTQPESPRFFLENGKHDEAWMVLKQVHDTNMRAKGHPERVFSVTHIKTIHQEDELIEIQSDTGTWYQRWGVRALSLGGQVWGNFLSCFGPEYRRITLMMMGVWFTMSFSYYGLTVWFPDMIRHLQAVDYASRTKVFPGERVEHVTFNFTLENQIHRGGQYLNDKFIGLRLKSVSFEDSLFEECYFEDVTSSNTFFRNCTFINTVFYNTDLFEYKFVNSRLINSTFLHNKEGCPLDVTGTGEGAYMVYFVSFLGTLAVLPGNIVSALLMDKIGRLRMLAGSSVMSCVSCFFLSFGNSESAMIALLCLFGGVSIASWNALDVLTVELYPSDKRTTAFGFLNALCKLAAVLGISIFTSFVGITKAAPILFASAALALGSSLALKLPETRGQVLQ.

An interaction with SYT1 region spans residues 1–57 (MEEGFRDRAAFIRGAKDIAKEVKKHAAKKVVKGLDRVQDEYSRRSYSRFEEEDDDDD). The Cytoplasmic segment spans residues 1 to 169 (MEEGFRDRAA…SHGRFQWTLY (169 aa)). Over residues 40–49 (EYSRRSYSRF) the composition is skewed to basic and acidic residues. The interval 40–144 (EYSRRSYSRF…GRGEAQRRKE (105 aa)) is disordered. 2 positions are modified to phosphoserine: S80 and S81. A Phosphothreonine modification is found at T84. A compositionally biased stretch (gly residues) spans 122 to 137 (VRGGLSDGEGPPGGRG). S127 carries the post-translational modification Phosphoserine. Residues 170–190 (FVLGLALMADGVEVFVVGFVL) form a helical membrane-spanning segment. Residues 191 to 205 (PSAEKDMCLSDSNKG) lie on the Extracellular side of the membrane. A helical transmembrane segment spans residues 206-226 (MLGLIVYLGMMVGAFLWGGLA). Topologically, residues 227–233 (DRLGRRQ) are cytoplasmic. Residues 234–254 (CLLISLSVNSVFAFFSSFVQG) traverse the membrane as a helical segment. Over 255–262 (YGTFLFCR) the chain is Extracellular. The chain crosses the membrane as a helical span at residues 263 to 283 (LLSGVGIGGSIPIVFSYFSEF). Residues 284-294 (LAQEKRGEHLS) are Cytoplasmic-facing. Residues 295–315 (WLCMFWMIGGVYAAAMAWAII) traverse the membrane as a helical segment. At 316-334 (PHYGWSFQMGSAYQFHSWR) the chain is on the extracellular side. Residues 335-355 (VFVLVCAFPSVFAIGALTTQP) form a helical membrane-spanning segment. The Cytoplasmic portion of the chain corresponds to 356-447 (ESPRFFLENG…CFGPEYRRIT (92 aa)). Phosphoserine is present on S393. A helical transmembrane segment spans residues 448-468 (LMMMGVWFTMSFSYYGLTVWF). The Extracellular portion of the chain corresponds to 469 to 598 (PDMIRHLQAV…GTGEGAYMVY (130 aa)). At Y480 the chain carries Phosphotyrosine. N-linked (GlcNAc...) asparagine glycosylation is found at N498, N548, and N573. Residues 599 to 619 (FVSFLGTLAVLPGNIVSALLM) form a helical membrane-spanning segment. Over 620–626 (DKIGRLR) the chain is Cytoplasmic. The helical transmembrane segment at 627–647 (MLAGSSVMSCVSCFFLSFGNS) threads the bilayer. The Extracellular segment spans residues 648–651 (ESAM). A helical membrane pass occupies residues 652-672 (IALLCLFGGVSIASWNALDVL). At 673–685 (TVELYPSDKRTTA) the chain is on the cytoplasmic side. The helical transmembrane segment at 686 to 708 (FGFLNALCKLAAVLGISIFTSFV) threads the bilayer. Over 709 to 712 (GITK) the chain is Extracellular. The helical transmembrane segment at 713-731 (AAPILFASAALALGSSLAL) threads the bilayer. Residues 732–742 (KLPETRGQVLQ) lie on the Cytoplasmic side of the membrane.

It belongs to the major facilitator superfamily. In terms of assembly, interacts with SYT1/synaptotagmin-1 in a calcium-dependent manner. Binds the adapter protein complex AP-2. In terms of processing, phosphorylation by CK1 of the N-terminal cytoplasmic domain regulates interaction with SYT1. Post-translationally, N-glycosylated.

The protein resides in the presynapse. Its subcellular location is the cytoplasmic vesicle. It localises to the secretory vesicle. It is found in the synaptic vesicle membrane. Plays a role in the control of regulated secretion in neural and endocrine cells, enhancing selectively low-frequency neurotransmission. Positively regulates vesicle fusion by maintaining the readily releasable pool of secretory vesicles. This chain is Synaptic vesicle glycoprotein 2A (SV2A), found in Pongo abelii (Sumatran orangutan).